A 351-amino-acid chain; its full sequence is Histidinol-phosphate aminotransferase 1 (351 aa).

N6-(pyridoxal phosphate)lysine is present on lysine 210.

It belongs to the class-II pyridoxal-phosphate-dependent aminotransferase family. Histidinol-phosphate aminotransferase subfamily. As to quaternary structure, homodimer. The cofactor is pyridoxal 5'-phosphate.

It carries out the reaction L-histidinol phosphate + 2-oxoglutarate = 3-(imidazol-4-yl)-2-oxopropyl phosphate + L-glutamate. The protein operates within amino-acid biosynthesis; L-histidine biosynthesis; L-histidine from 5-phospho-alpha-D-ribose 1-diphosphate: step 7/9. The polypeptide is Histidinol-phosphate aminotransferase 1 (hisC1) (Pseudomonas aeruginosa (strain ATCC 15692 / DSM 22644 / CIP 104116 / JCM 14847 / LMG 12228 / 1C / PRS 101 / PAO1)).